The following is a 111-amino-acid chain: Large ribosomal subunit protein uL22 (111 aa).

Belongs to the universal ribosomal protein uL22 family. Part of the 50S ribosomal subunit.

This protein binds specifically to 23S rRNA; its binding is stimulated by other ribosomal proteins, e.g. L4, L17, and L20. It is important during the early stages of 50S assembly. It makes multiple contacts with different domains of the 23S rRNA in the assembled 50S subunit and ribosome. Functionally, the globular domain of the protein is located near the polypeptide exit tunnel on the outside of the subunit, while an extended beta-hairpin is found that lines the wall of the exit tunnel in the center of the 70S ribosome. The polypeptide is Large ribosomal subunit protein uL22 (Chlamydia felis (strain Fe/C-56) (Chlamydophila felis)).